A 157-amino-acid chain; its full sequence is Endoribonuclease YbeY (157 aa).

Zn(2+)-binding residues include His113, His117, and His123.

This sequence belongs to the endoribonuclease YbeY family. Zn(2+) serves as cofactor.

It localises to the cytoplasm. Single strand-specific metallo-endoribonuclease involved in late-stage 70S ribosome quality control and in maturation of the 3' terminus of the 16S rRNA. The polypeptide is Endoribonuclease YbeY (Ehrlichia ruminantium (strain Gardel)).